Consider the following 346-residue polypeptide: CLOCK-interacting pacemaker (346 aa).

Residues 1 to 42 (MEKNQKCATEQERFKARSGHGDGQRAEPRKTQTTTESDKDSG) are compositionally biased toward basic and acidic residues. Disordered regions lie at residues 1-83 (MEKN…SQPQ) and 167-228 (CARK…KELD). Polar residues predominate over residues 50–68 (CLSSVEQTDTEEGPTTSRW). Basic residues predominate over residues 179 to 192 (NQTKRQCSKGHSGS). A compositionally biased stretch (polar residues) spans 205–222 (GVQQGPVDQNVKESSVSA). Residues 283 to 315 (MKTKELARHNQATQSQLEKLQEQVQLYATAMSS) are a coiled coil.

It is found in the nucleus. It localises to the cytoplasm. Its subcellular location is the cytosol. Functionally, transcriptional repressor which acts as a negative-feedback regulator of CLOCK-BMAL1 transcriptional activity in the circadian-clock mechanism. The physiological relevance of these observations is unsure. The polypeptide is CLOCK-interacting pacemaker (cipc) (Xenopus laevis (African clawed frog)).